We begin with the raw amino-acid sequence, 235 residues long: Ribonuclease S-2 (235 aa).

The N-terminal stretch at 1–31 (MATVQKSQHSHFFLLVGCIVHLSNFCSTTTA) is a signal peptide. Q41 is an RNA binding site. Cysteines 47 and 54 form a disulfide. Position 66 (H66) interacts with RNA. Residue H66 is the Proton donor of the active site. Residue N72 is glycosylated (N-linked (GlcNAc...) asparagine). Intrachain disulfides connect C80-C129, C189-C217, and C200-C211. RNA-binding positions include 105–106 (DL), R108, and F118. The active site involves Q122. 125 to 126 (KH) contributes to the RNA binding site. The Proton acceptor role is filled by H126.

It belongs to the RNase T2 family.

The protein resides in the secreted. Its subcellular location is the extracellular space. It carries out the reaction a ribonucleotidyl-ribonucleotide-RNA + H2O = a 3'-end 3'-phospho-ribonucleotide-RNA + a 5'-end dephospho-ribonucleoside-RNA + H(+). Functionally, self-incompatibility (SI) is the inherited ability of a flowering plant to prevent self-fertilization by discriminating between self and non-self pollen during pollination. In many species, self-incompatibility is controlled by the single, multiallelic locus S. This Antirrhinum hispanicum (Snapdragon) protein is Ribonuclease S-2 (S2).